Consider the following 100-residue polypeptide: Small ribosomal subunit protein uS14c (100 aa).

It belongs to the universal ribosomal protein uS14 family. As to quaternary structure, part of the 30S ribosomal subunit.

Its subcellular location is the plastid. The protein resides in the chloroplast. Binds 16S rRNA, required for the assembly of 30S particles. The polypeptide is Small ribosomal subunit protein uS14c (Olimarabidopsis pumila (Dwarf rocket)).